The sequence spans 146 residues: 3-hydroxyacyl-[acyl-carrier-protein] dehydratase FabZ (146 aa).

Residue His-47 is part of the active site.

The protein belongs to the thioester dehydratase family. FabZ subfamily.

Its subcellular location is the cytoplasm. It catalyses the reaction a (3R)-hydroxyacyl-[ACP] = a (2E)-enoyl-[ACP] + H2O. In terms of biological role, involved in unsaturated fatty acids biosynthesis. Catalyzes the dehydration of short chain beta-hydroxyacyl-ACPs and long chain saturated and unsaturated beta-hydroxyacyl-ACPs. The chain is 3-hydroxyacyl-[acyl-carrier-protein] dehydratase FabZ from Nitrosospira multiformis (strain ATCC 25196 / NCIMB 11849 / C 71).